Here is a 367-residue protein sequence, read N- to C-terminus: Cyclin-dependent kinase 5 activator 2 (367 aa).

A compositionally biased stretch (polar residues) spans 1–11; it reads MGTVLSLSPAS. Disordered regions lie at residues 1–56, 72–98, 131–175, and 329–367; these read MGTV…RLKR, ASAK…LVQQ, AAAT…GSPR, and GEAA…NLDR. Gly2 carries N-myristoyl glycine lipidation. Basic residues predominate over residues 74 to 84; the sequence is AKKKKGSKKVT. At Thr84 the chain carries Phosphothreonine. A compositionally biased stretch (low complexity) spans 131–148; the sequence is AAATCEPPSGGSAAAQPP. The segment covering 154–171 has biased composition (pro residues); it reads KPPPPPPPAPQVAPPVPG. Residues 342 to 357 are compositionally biased toward low complexity; sequence GAPAASSAARDSCAAG.

Belongs to the cyclin-dependent kinase 5 activator family. In terms of assembly, heterodimer of a catalytic subunit and a regulatory subunit. In terms of processing, myristoylated. The Gly-2-Ala mutant is absent of the cell periphery, suggesting that a proper myristoylation signal is essential for the proper distribution of CDK5R2 (p39). Brain and neuron specific.

The protein localises to the cell membrane. Its function is as follows. Activator of CDK5/TPKII. The sequence is that of Cyclin-dependent kinase 5 activator 2 (CDK5R2) from Homo sapiens (Human).